A 285-amino-acid chain; its full sequence is Iron uptake system component EfeM (285 aa).

An N-terminal signal peptide occupies residues 1-34; sequence MTYPLLTRKTLMKKTPLALLLTLGLLQTPLAAFA.

Belongs to the EfeM/EfeO family. As to quaternary structure, component of the iron transporter efeUOB/M complex composed of EfeU, EfeM and EfeB.

It localises to the periplasm. Functionally, part of the iron transporter system efeUOB/M involved in iron import. Specifically binds Fe(3+), which is produced by EfeB-mediated oxidation of Fe(2+), and delivers it to the cell inner membrane permease EfeU. Also binds Zn(2+) and Cu(2+) in vitro. In Pseudomonas syringae pv. syringae (strain B728a), this protein is Iron uptake system component EfeM.